The primary structure comprises 113 residues: MTPTNRHTHGQNAQHARRNAQQSRDAARRKLIAQHAALAEQRARNRRRSDTEQPTSDTTNPAAHSTLPAQRTNAQNAARNAHSTVPEQPTHATTAARARLYGLRLHNTATTDK.

The interval 1-93 is disordered; that stretch reads MTPTNRHTHG…TVPEQPTHAT (93 aa). Residues 11–22 are compositionally biased toward low complexity; that stretch reads QNAQHARRNAQQ. Residues 52-63 show a composition bias toward polar residues; it reads EQPTSDTTNPAA. The span at 69-81 shows a compositional bias: low complexity; sequence AQRTNAQNAARNA. A compositionally biased stretch (polar residues) spans 82–93; that stretch reads HSTVPEQPTHAT.

It belongs to the gas vesicle GvpI family. GvpF to GvpM interact with each other in vitro, and may form multi-subunit complex(es). Interacts with GvpC and GvpO.

It localises to the gas vesicle. In terms of biological role, proteins GvpF to GvpM might be involved in nucleating gas vesicle formation. A minor component of the gas vesicle. Gas vesicles are hollow, gas filled proteinaceous nanostructures found in several microbial planktonic microorganisms. They allow positioning of halobacteria at the optimal depth for growth in the poorly aerated, shallow brine pools of their habitat. Expression of 2 c-vac DNA fragments containing 2 divergently transcribed regions (gvpE-gvpF-gvpG-gvpH-gvpI-gvpJ-gvpK-gvpL-gvpM and gvpA-gvpC-gvpN-gvpO) allows H.volcanii to produce gas vesicles. The protein is Gas vesicle protein I2 of Halobacterium salinarum (strain ATCC 700922 / JCM 11081 / NRC-1) (Halobacterium halobium).